The primary structure comprises 232 residues: tRNA (guanine-N(1)-)-methyltransferase (232 aa).

Glycine 116 provides a ligand contact to S-adenosyl-L-methionine.

Belongs to the RNA methyltransferase TrmD family. In terms of assembly, homodimer.

It is found in the cytoplasm. It carries out the reaction guanosine(37) in tRNA + S-adenosyl-L-methionine = N(1)-methylguanosine(37) in tRNA + S-adenosyl-L-homocysteine + H(+). Functionally, specifically methylates guanosine-37 in various tRNAs. This chain is tRNA (guanine-N(1)-)-methyltransferase, found in Chlorobium luteolum (strain DSM 273 / BCRC 81028 / 2530) (Pelodictyon luteolum).